A 343-amino-acid polypeptide reads, in one-letter code: Protein RecA (343 aa).

An ATP-binding site is contributed by 66-73 (GPESSGKT).

It belongs to the RecA family.

It localises to the cytoplasm. In terms of biological role, can catalyze the hydrolysis of ATP in the presence of single-stranded DNA, the ATP-dependent uptake of single-stranded DNA by duplex DNA, and the ATP-dependent hybridization of homologous single-stranded DNAs. It interacts with LexA causing its activation and leading to its autocatalytic cleavage. The protein is Protein RecA of Rickettsia conorii (strain ATCC VR-613 / Malish 7).